We begin with the raw amino-acid sequence, 87 residues long: MANIKQQKKRVLTNEIARKRNQAIRSRLRTETRKFNAAVEAGDKEAAEAQLRVASRFYDKAVTKGTIHRNNAANKKSGMAARFNKMA.

It belongs to the bacterial ribosomal protein bS20 family.

Binds directly to 16S ribosomal RNA. This is Small ribosomal subunit protein bS20 from Corynebacterium jeikeium (strain K411).